A 457-amino-acid chain; its full sequence is Argininosuccinate lyase (457 aa).

The protein belongs to the lyase 1 family. Argininosuccinate lyase subfamily.

It localises to the cytoplasm. The catalysed reaction is 2-(N(omega)-L-arginino)succinate = fumarate + L-arginine. The protein operates within amino-acid biosynthesis; L-arginine biosynthesis; L-arginine from L-ornithine and carbamoyl phosphate: step 3/3. This is Argininosuccinate lyase from Erwinia tasmaniensis (strain DSM 17950 / CFBP 7177 / CIP 109463 / NCPPB 4357 / Et1/99).